Reading from the N-terminus, the 513-residue chain is Putative ribose/galactose/methyl galactoside import ATP-binding protein 2 (513 aa).

ABC transporter domains follow at residues 24–260 and 270–510; these read LSAE…VGRE and VPIG…VMEL. 56 to 63 contributes to the ATP binding site; it reads GENGAGKS.

The protein belongs to the ABC transporter superfamily. Carbohydrate importer 2 (CUT2) (TC 3.A.1.2) family.

It localises to the cell inner membrane. It carries out the reaction D-ribose(out) + ATP + H2O = D-ribose(in) + ADP + phosphate + H(+). The enzyme catalyses D-galactose(out) + ATP + H2O = D-galactose(in) + ADP + phosphate + H(+). Functionally, part of an ABC transporter complex involved in carbohydrate import. Could be involved in ribose, galactose and/or methyl galactoside import. Responsible for energy coupling to the transport system. The protein is Putative ribose/galactose/methyl galactoside import ATP-binding protein 2 of Rhizobium etli (strain ATCC 51251 / DSM 11541 / JCM 21823 / NBRC 15573 / CFN 42).